The chain runs to 569 residues: Arylsulfatase I (569 aa).

Positions 1–23 are cleaved as a signal peptide; it reads MHTLTGFSLVSLLSFGYLSWDWA. Positions 55, 56, and 93 each coordinate Ca(2+). The active-site Nucleophile is Cys93. Cys93 bears the 3-oxoalanine (Cys) mark. Lys147 serves as a coordination point for substrate. His149 is a catalytic residue. Substrate is bound at residue His239. N-linked (GlcNAc...) asparagine glycosylation is found at Asn276 and Asn288. Asp297 and Asn298 together coordinate Ca(2+). Position 315 (Lys315) interacts with substrate. N-linked (GlcNAc...) asparagine glycans are attached at residues Asn466 and Asn496. The tract at residues 510–539 is disordered; that stretch reads RAHPDFNGGAWGPWASDEEEEEEEGRARSF.

Belongs to the sulfatase family. It depends on Ca(2+) as a cofactor. Post-translationally, the oxidation of Cys-93 residue to 3-oxoalanine (also known as C(alpha)-formylglycine) by SUMF1/Sulfatase-modifying factor 1, seems critical for catalytic activity. In terms of tissue distribution, expressed in placenta, in embryonic stem cells, fetal eyes and lens.

It localises to the secreted. It is found in the endoplasmic reticulum. In terms of biological role, displays arylsulfatase activity at neutral pH, when co-expressed with SUMF1; arylsulfatase activity is measured in the secretion medium of retinal cell line, but no activity is recorded when measured in cell extracts. Lacks arylsulfatase activity. The protein is Arylsulfatase I (ARSI) of Homo sapiens (Human).